Reading from the N-terminus, the 502-residue chain is ATP synthase subunit alpha (502 aa).

Gly-169 to Thr-176 contacts ATP.

The protein belongs to the ATPase alpha/beta chains family. As to quaternary structure, F-type ATPases have 2 components, CF(1) - the catalytic core - and CF(0) - the membrane proton channel. CF(1) has five subunits: alpha(3), beta(3), gamma(1), delta(1), epsilon(1). CF(0) has three main subunits: a(1), b(2) and c(9-12). The alpha and beta chains form an alternating ring which encloses part of the gamma chain. CF(1) is attached to CF(0) by a central stalk formed by the gamma and epsilon chains, while a peripheral stalk is formed by the delta and b chains.

Its subcellular location is the cell inner membrane. It catalyses the reaction ATP + H2O + 4 H(+)(in) = ADP + phosphate + 5 H(+)(out). In terms of biological role, produces ATP from ADP in the presence of a proton gradient across the membrane. The alpha chain is a regulatory subunit. The polypeptide is ATP synthase subunit alpha (Trichlorobacter lovleyi (strain ATCC BAA-1151 / DSM 17278 / SZ) (Geobacter lovleyi)).